Consider the following 110-residue polypeptide: Flagellar hook-basal body complex protein FliE (110 aa).

Belongs to the FliE family.

Its subcellular location is the bacterial flagellum basal body. The polypeptide is Flagellar hook-basal body complex protein FliE (Bordetella petrii (strain ATCC BAA-461 / DSM 12804 / CCUG 43448)).